Here is a 272-residue protein sequence, read N- to C-terminus: HMP-PP phosphatase (272 aa).

Residue aspartate 8 is the Nucleophile of the active site. The Mg(2+) site is built by aspartate 8, aspartate 10, and aspartate 212.

It belongs to the HAD-like hydrolase superfamily. Cof family. Requires Mg(2+) as cofactor.

It catalyses the reaction 4-amino-2-methyl-5-(diphosphooxymethyl)pyrimidine + H2O = 4-amino-2-methyl-5-(phosphooxymethyl)pyrimidine + phosphate + H(+). Its function is as follows. Catalyzes the hydrolysis of 4-amino-2-methyl-5-hydroxymethylpyrimidine pyrophosphate (HMP-PP) to 4-amino-2-methyl-5-hydroxymethylpyrimidine phosphate (HMP-P). The polypeptide is HMP-PP phosphatase (Salmonella newport (strain SL254)).